Reading from the N-terminus, the 325-residue chain is Olfactory receptor 10AC1 (325 aa).

The Extracellular segment spans residues 1–26 (MDSPSNATVPCGFLLQGFSEFPHLRP). The N-linked (GlcNAc...) asparagine glycan is linked to Asn6. A helical transmembrane segment spans residues 27–47 (VLFLLLLGVHLATLGGNLLIL). Over 48–57 (VAVASMPSRQ) the chain is Cytoplasmic. Residues 58 to 78 (PMLLFLCQLSAIELCYTLVVV) form a helical membrane-spanning segment. At 79–101 (PRSLVDLSTPGHRRGSPISFLSC) the chain is on the extracellular side. Residues 102 to 122 (AFQMQMFVALGGAECFLLAAM) traverse the membrane as a helical segment. Residues 123-147 (AYDRYVAICHPLRYAAVVTPGLCAR) are Cytoplasmic-facing. The helical transmembrane segment at 148–168 (LALACCLRGLAVSVGLTVAIF) threads the bilayer. Over 169-171 (HLP) the chain is Extracellular. The helical transmembrane segment at 172–192 (FCGSRLLLHFFCDITALLHLA) threads the bilayer. The Cytoplasmic portion of the chain corresponds to 193–200 (CTRSYADE). A helical membrane pass occupies residues 201-221 (LPLLGACLVLLLLPSVLILAS). Topologically, residues 222 to 243 (YGAIAAALRRLRCPKGRGKAAS) are extracellular. Residues 244–264 (TCALHLAVTFLHYGCATFMYV) traverse the membrane as a helical segment. Topologically, residues 265–325 (RPRASYSPRL…QAPGGDLREL (61 aa)) are cytoplasmic.

This sequence belongs to the G-protein coupled receptor 1 family.

Its subcellular location is the cell membrane. In terms of biological role, odorant receptor. The chain is Olfactory receptor 10AC1 (OR10AC1) from Homo sapiens (Human).